Here is a 126-residue protein sequence, read N- to C-terminus: MKMILALVVLGLVLVAAEDKYTTKYDNIDVDEILKSDRLFGNYFKCLVDNGKCTPEGRELKKSLPDALKTECSKCSEKQRQNTDKVIRYIIENKPEEWKQLQAKYDPDEIYIKRYRATAEASGIKV.

An N-terminal signal peptide occupies residues 1 to 17 (MKMILALVVLGLVLVAA).

It belongs to the insect A10/OS-D protein family. Specifically expressed in the ejaculatory bulb and seminal fluid.

The protein resides in the secreted. Its function is as follows. Protein component of the posterior mating plug. This chain is Ejaculatory bulb-specific protein 3, found in Drosophila melanogaster (Fruit fly).